The chain runs to 299 residues: MSDVTGDLAAVSEAKGGSDAARISEVKAWLTSQFEAVGKEVPNFEYTHRSITHLYNLATASQAKSQAATIVANDFRLKASEYRAQAARIREILESAGMSQESLPSNVVSSAQVLANVANLLNIRDTELSSFLVAMGDISLRKTGVEEKRAKAQKESNALLDYTRKAIQRLTYLKKILAQLEDDVVPCESQMENWKTNLEVMAVKEEQYIQQYKKYEQMLLNRVGYTPKISHRELVEMAEHRKELDKMTKPVLDTLRSYQDLPPDKALAALAIEDKKRQFTAAEKYLEEVLQSALETNDE.

An N-acetylserine modification is found at Ser2. 2 coiled-coil regions span residues 76–96 (RLKASEYRAQAARIREILESA) and 164–184 (RKAIQRLTYLKKILAQLEDDV).

The protein belongs to the HAUS1 family. As to quaternary structure, part of the augmin complex composed of 8 subunits. The complex acts on microtubules and interacts with gamma-tubulin in spindles and the phragmoplast. Interacts with AUG3.

Its subcellular location is the cytoplasm. It localises to the cytoskeleton. The protein localises to the spindle. The protein resides in the phragmoplast. In terms of biological role, involved in microtubules reorganization during spindle and phragmoplast development. The protein is AUGMIN subunit 1 of Arabidopsis thaliana (Mouse-ear cress).